A 142-amino-acid chain; its full sequence is Cytochrome c-type biogenesis protein CcmE (142 aa).

Residues 1-2 (MK) lie on the Cytoplasmic side of the membrane. Residues 3–23 (GKYLLGILVILGALGYMVFGG) form a helical; Signal-anchor for type II membrane protein membrane-spanning segment. The Periplasmic segment spans residues 24 to 142 (LGRNLVYFLT…EVRKLIEEAQ (119 aa)). Histidine 118 and tyrosine 122 together coordinate heme.

This sequence belongs to the CcmE/CycJ family.

The protein resides in the cell inner membrane. Functionally, heme chaperone required for the biogenesis of c-type cytochromes. Transiently binds heme delivered by CcmC and transfers the heme to apo-cytochromes in a process facilitated by CcmF and CcmH. This is Cytochrome c-type biogenesis protein CcmE from Thermus thermophilus (strain ATCC BAA-163 / DSM 7039 / HB27).